The primary structure comprises 418 residues: Gamma-glutamyl phosphate reductase (418 aa).

Belongs to the gamma-glutamyl phosphate reductase family.

The protein resides in the cytoplasm. The enzyme catalyses L-glutamate 5-semialdehyde + phosphate + NADP(+) = L-glutamyl 5-phosphate + NADPH + H(+). Its pathway is amino-acid biosynthesis; L-proline biosynthesis; L-glutamate 5-semialdehyde from L-glutamate: step 2/2. Its function is as follows. Catalyzes the NADPH-dependent reduction of L-glutamate 5-phosphate into L-glutamate 5-semialdehyde and phosphate. The product spontaneously undergoes cyclization to form 1-pyrroline-5-carboxylate. This chain is Gamma-glutamyl phosphate reductase, found in Clostridium kluyveri (strain NBRC 12016).